Reading from the N-terminus, the 294-residue chain is 4-hydroxy-tetrahydrodipicolinate synthase (294 aa).

Pyruvate is bound at residue Thr44. Catalysis depends on Tyr132, which acts as the Proton donor/acceptor. Lys160 serves as the catalytic Schiff-base intermediate with substrate. Val202 provides a ligand contact to pyruvate.

It belongs to the DapA family. As to quaternary structure, homotetramer; dimer of dimers.

Its subcellular location is the cytoplasm. It catalyses the reaction L-aspartate 4-semialdehyde + pyruvate = (2S,4S)-4-hydroxy-2,3,4,5-tetrahydrodipicolinate + H2O + H(+). The protein operates within amino-acid biosynthesis; L-lysine biosynthesis via DAP pathway; (S)-tetrahydrodipicolinate from L-aspartate: step 3/4. In terms of biological role, catalyzes the condensation of (S)-aspartate-beta-semialdehyde [(S)-ASA] and pyruvate to 4-hydroxy-tetrahydrodipicolinate (HTPA). The sequence is that of 4-hydroxy-tetrahydrodipicolinate synthase from Leptospira biflexa serovar Patoc (strain Patoc 1 / Ames).